The following is a 72-amino-acid chain: uncharacterized protein (72 aa).

This sequence belongs to the asfivirus I73R family.

The protein localises to the virion. This is an uncharacterized protein from Ornithodoros (relapsing fever ticks).